A 260-amino-acid chain; its full sequence is MMIIISPAKTLDFSKFNETLPMTKPYFLNEARELVEELKKYDNFSLEKLMKISPKLAKLNTQRFQNWSESLESARQCLVAFKGEVFKGIDVGSYTMEDYFYANDNLRILSGLYGVLKPFDGINLYRLEMATRLGIGGFKNLYDYWGNKLIDNIMKDIERRENKAIVNLASYEYFKAIEDIKTIGDIRVITPIFKEYRDGEYKIITIMAKRARGLMTSFIIRNKIEDLEELKEFNHDGYEFNEELSNEADLVFTRDIHNRN.

Belongs to the UPF0246 family.

This chain is UPF0246 protein Cbei_1739, found in Clostridium beijerinckii (strain ATCC 51743 / NCIMB 8052) (Clostridium acetobutylicum).